A 544-amino-acid chain; its full sequence is Probable protein kinase UbiB (544 aa).

The 379-residue stretch at 123-501 folds into the Protein kinase domain; sequence EFDIKPLASA…KRQQATGKFL (379 aa). ATP-binding positions include 129-137 and Lys-152; that span reads LASASIAQV. The Proton acceptor role is filled by Asp-287. 2 helical membrane passes run 496–516 and 519–539; these read ATGK…AILV and AYEQ…LLSW.

This sequence belongs to the ABC1 family. UbiB subfamily.

It localises to the cell inner membrane. Its pathway is cofactor biosynthesis; ubiquinone biosynthesis [regulation]. Functionally, is probably a protein kinase regulator of UbiI activity which is involved in aerobic coenzyme Q (ubiquinone) biosynthesis. This is Probable protein kinase UbiB from Vibrio campbellii (strain ATCC BAA-1116).